A 196-amino-acid polypeptide reads, in one-letter code: HTH-type transcriptional regulator BetI (196 aa).

The 61-residue stretch at 8–68 (PIRRSQLIAA…ATMRHLMQAL (61 aa)) folds into the HTH tetR-type domain. The H-T-H motif DNA-binding region spans 31–50 (SIAYIARLAGVSNGIISHYF).

It participates in amine and polyamine biosynthesis; betaine biosynthesis via choline pathway [regulation]. Functionally, repressor involved in the biosynthesis of the osmoprotectant glycine betaine. It represses transcription of the choline transporter BetT and the genes of BetAB involved in the synthesis of glycine betaine. The polypeptide is HTH-type transcriptional regulator BetI (Ectopseudomonas mendocina (strain ymp) (Pseudomonas mendocina)).